Consider the following 527-residue polypeptide: Amidophosphoribosyltransferase (527 aa).

Residues 1–30 (MAVDSDYVTDRAAGSRQTVTGQQPEQDLNS) form a disordered region. Residues 1–34 (MAVDSDYVTDRAAGSRQTVTGQQPEQDLNSPREE) constitute a propeptide that is removed on maturation. A compositionally biased stretch (polar residues) spans 15-29 (SRQTVTGQQPEQDLN). C35 acts as the Nucleophile in catalysis. The Glutamine amidotransferase type-2 domain maps to 35 to 261 (CGVFGVWAPG…PGELLAIDAD (227 aa)). C276 serves as a coordination point for [4Fe-4S] cluster. 3 residues coordinate Mg(2+): S323, D385, and D386. Residues C422, C478, and C481 each coordinate [4Fe-4S] cluster.

The protein in the C-terminal section; belongs to the purine/pyrimidine phosphoribosyltransferase family. It depends on Mg(2+) as a cofactor. [4Fe-4S] cluster is required as a cofactor.

It carries out the reaction 5-phospho-beta-D-ribosylamine + L-glutamate + diphosphate = 5-phospho-alpha-D-ribose 1-diphosphate + L-glutamine + H2O. The protein operates within purine metabolism; IMP biosynthesis via de novo pathway; N(1)-(5-phospho-D-ribosyl)glycinamide from 5-phospho-alpha-D-ribose 1-diphosphate: step 1/2. Catalyzes the formation of phosphoribosylamine from phosphoribosylpyrophosphate (PRPP) and glutamine. The sequence is that of Amidophosphoribosyltransferase from Mycobacterium bovis (strain ATCC BAA-935 / AF2122/97).